The primary structure comprises 171 residues: Myosin regulatory light polypeptide 9 (171 aa).

A compositionally biased stretch (basic residues) spans 1 to 15; the sequence is MSSKRAKAKTTKKRP. Positions 1–21 are disordered; sequence MSSKRAKAKTTKKRPQSATSN. At serine 2 the chain carries N-acetylserine. Threonine 19 is subject to Phosphothreonine; by MLCK, CIT and ROCK2. Serine 20 bears the Phosphoserine; by CDC42BP, CIT, MLCK, PAK1, ROCK1, ROCK2, DAPK1, DAPK2 and ZIPK/DAPK3 mark. EF-hand domains follow at residues 29 to 64 and 98 to 133; these read SQIQ…LGKN and DPED…MGDR. 4 residues coordinate Ca(2+): aspartate 42, asparagine 44, aspartate 46, and aspartate 53.

As to quaternary structure, myosin is a hexamer of 2 heavy chains and 4 light chains: interacts with myosin heavy chain MYO19. Interacts with LUZP1; the interaction results in inhibition of phosphorylation of MYL9 by DAPK3. Post-translationally, phosphorylation increases the actin-activated myosin ATPase activity and thereby regulates the contractile activity. It is required to generate the driving force in the migration of the cells but not necessary for localization of myosin-2 at the leading edge. Phosphorylation is required for myotube formation. Phosphorylated by DAPK3; DAPK3-mediated phosphorylation is inhibited by LUZP1. In terms of tissue distribution, smooth muscle tissues and in some, but not all, nonmuscle cells.

Its subcellular location is the cytoplasm. The protein resides in the cytoskeleton. It is found in the cell cortex. Myosin regulatory subunit that plays an important role in regulation of both smooth muscle and nonmuscle cell contractile activity via its phosphorylation. Implicated in cytokinesis, receptor capping, and cell locomotion. In myoblasts, may regulate PIEZO1-dependent cortical actomyosin assembly involved in myotube formation. This is Myosin regulatory light polypeptide 9 (Myl9) from Rattus norvegicus (Rat).